The primary structure comprises 256 residues: Imidazole glycerol phosphate synthase subunit HisF (256 aa).

Residues Asp12 and Asp131 contribute to the active site.

This sequence belongs to the HisA/HisF family. Heterodimer of HisH and HisF.

Its subcellular location is the cytoplasm. It catalyses the reaction 5-[(5-phospho-1-deoxy-D-ribulos-1-ylimino)methylamino]-1-(5-phospho-beta-D-ribosyl)imidazole-4-carboxamide + L-glutamine = D-erythro-1-(imidazol-4-yl)glycerol 3-phosphate + 5-amino-1-(5-phospho-beta-D-ribosyl)imidazole-4-carboxamide + L-glutamate + H(+). Its pathway is amino-acid biosynthesis; L-histidine biosynthesis; L-histidine from 5-phospho-alpha-D-ribose 1-diphosphate: step 5/9. Its function is as follows. IGPS catalyzes the conversion of PRFAR and glutamine to IGP, AICAR and glutamate. The HisF subunit catalyzes the cyclization activity that produces IGP and AICAR from PRFAR using the ammonia provided by the HisH subunit. The chain is Imidazole glycerol phosphate synthase subunit HisF from Micrococcus luteus (strain ATCC 4698 / DSM 20030 / JCM 1464 / CCM 169 / CCUG 5858 / IAM 1056 / NBRC 3333 / NCIMB 9278 / NCTC 2665 / VKM Ac-2230) (Micrococcus lysodeikticus).